Consider the following 150-residue polypeptide: Viral late gene transcription factor 2 (150 aa).

This sequence belongs to the orthopoxvirus VLTF-2/OPG126 family. In terms of assembly, interacts with the late transcription elongation factor VLTF-4/OPG110. Interacts with the late transcription factors VLTF-1/OPG093.

Acts with RNA polymerase to initiate transcription from late gene promoters. This Monkeypox virus protein is Viral late gene transcription factor 2 (OPG126).